A 210-amino-acid chain; its full sequence is 3-hexulose-6-phosphate synthase (210 aa).

Belongs to the HPS/KGPDC family. HPS subfamily.

The enzyme catalyses D-ribulose 5-phosphate + formaldehyde = D-arabino-hex-3-ulose 6-phosphate. It functions in the pathway one-carbon metabolism; formaldehyde assimilation via RuMP pathway; D-fructose 6-phosphate from D-ribulose 5-phosphate and formaldehyde: step 1/2. Catalyzes the condensation of ribulose 5-phosphate with formaldehyde to form 3-hexulose 6-phosphate. Together with HxlB, may act as a formaldehyde detoxification system. The chain is 3-hexulose-6-phosphate synthase (hxlA) from Bacillus subtilis (strain 168).